A 273-amino-acid polypeptide reads, in one-letter code: Protein ALUMINUM SENSITIVE 3 (273 aa).

Helical transmembrane passes span 14–34 (WLIVFLKGMVKPAAALVVVLL), 51–71 (IYSVSRSFLQLSVIGFVLQFI), 76–96 (NSGWIILAYLFMVSVAGYTAG), 107–127 (YVAGLSILAGTSITMFLLVLL), 136–156 (YMIPIAGMLVGNAMTVTGVTM), 191–213 (ALVISLSPVLDSCKTVGLISLPG), and 228–248 (AIQLQIVVMNMMVGAATVSSI).

The protein belongs to the UPF0014 family. Expressed in roots, leaves, stems, and flowers.

The protein resides in the cell membrane. In terms of biological role, required for aluminum (Al) resistance/tolerance, probably by translocating Al from sensitive tissues such as growing roots to tissues less sensisitive to the toxic effects of Al. This is Protein ALUMINUM SENSITIVE 3 (ALS3) from Arabidopsis thaliana (Mouse-ear cress).